The primary structure comprises 173 residues: MALRSVKTPTLITSVAVVSSSVTNKPHSIRFSLKPTSALVVHNHQLSFYGSNLKLKPTKFRCSASALTPQLKDTLEKLVNSEKVVLFMKGTRDFPMCGFSNTVVQILKNLNVPFEDVNILENEMLRQGLKEYSNWPTFPQLYIGGEFFGGCDITLEAFKTGELQEEVEKAMCS.

A chloroplast-targeting transit peptide spans 1–63; sequence MALRSVKTPT…KLKPTKFRCS (63 aa). One can recognise a Glutaredoxin domain in the interval 72–173; sequence KDTLEKLVNS…QEEVEKAMCS (102 aa). K89 lines the glutathione pocket. Residues C97 and F99 each contribute to the [2Fe-2S] cluster site. C97 carries the post-translational modification S-glutathionyl cysteine. The tract at residues 97-100 is required for CAX1 activation; it reads CGFS. Glutathione contacts are provided by R126 and K130. A required for CAX1 activation region spans residues 133–137; sequence SNWPT. Residues F138 and 151–152 contribute to the glutathione site; that span reads CD.

Belongs to the glutaredoxin family. CGFS subfamily. As to quaternary structure, [2Fe-2S]-bridged holo-homodimer. Interacts with N-terminal part of CAX1 in yeast. Interacts in vitro with SUFE1, BOLA1, BOLA2 and BOLA4. Interacts in vivo only with SUFE1, BOLA1 and BOLA4. Interacts with SBP1. In terms of tissue distribution, highly expressed in leaves, at intermediate levels in stems and at lower levels in roots and flowers.

The protein localises to the plastid. It is found in the chloroplast. Functionally, may only reduce GSH-thiol disulfides, but not protein disulfides (Potential). Probably involved in the regulation of the redox state of the BOLA proteins (Potential). May act as Fe-S cluster donors to Fe-S cluster-requiring proteins. May protect cells against protein oxidative damage. May regulate CAX cation transporters. The GRXS14-BOLA1 heterodimer binds a labile, oxygen sensitive Fe-S cluster. This Arabidopsis thaliana (Mouse-ear cress) protein is Monothiol glutaredoxin-S14, chloroplastic.